We begin with the raw amino-acid sequence, 110 residues long: MSVVIRLARAGTKKRPVYHVVVADSRFPRDGRFIERLGYFNPLLPKDNEARLKLDMEKVKAWVAKGAQPSDRVSRFLDAAGVKKREARNNPQKAVPRKERKAQAEAAAKG.

Positions 79–110 are disordered; sequence AAGVKKREARNNPQKAVPRKERKAQAEAAAKG.

Belongs to the bacterial ribosomal protein bS16 family.

This Bradyrhizobium diazoefficiens (strain JCM 10833 / BCRC 13528 / IAM 13628 / NBRC 14792 / USDA 110) protein is Small ribosomal subunit protein bS16.